A 265-amino-acid polypeptide reads, in one-letter code: 3-methyl-2-oxobutanoate hydroxymethyltransferase (265 aa).

Residues Asp-44 and Asp-83 each contribute to the Mg(2+) site. 3-methyl-2-oxobutanoate-binding positions include 44-45 (DS), Asp-83, and Lys-113. Residue Glu-115 coordinates Mg(2+). Glu-183 acts as the Proton acceptor in catalysis.

It belongs to the PanB family. As to quaternary structure, homodecamer; pentamer of dimers. Mg(2+) is required as a cofactor.

It is found in the cytoplasm. It carries out the reaction 3-methyl-2-oxobutanoate + (6R)-5,10-methylene-5,6,7,8-tetrahydrofolate + H2O = 2-dehydropantoate + (6S)-5,6,7,8-tetrahydrofolate. Its pathway is cofactor biosynthesis; (R)-pantothenate biosynthesis; (R)-pantoate from 3-methyl-2-oxobutanoate: step 1/2. In terms of biological role, catalyzes the reversible reaction in which hydroxymethyl group from 5,10-methylenetetrahydrofolate is transferred onto alpha-ketoisovalerate to form ketopantoate. This is 3-methyl-2-oxobutanoate hydroxymethyltransferase from Leptospira interrogans serogroup Icterohaemorrhagiae serovar copenhageni (strain Fiocruz L1-130).